Reading from the N-terminus, the 130-residue chain is Glycine cleavage system H protein (130 aa).

A Lipoyl-binding domain is found at 23–105 (IGIIGITDFA…YGKGWMIKVE (83 aa)). Lysine 64 carries the N6-lipoyllysine modification.

The protein belongs to the GcvH family. As to quaternary structure, the glycine cleavage system is composed of four proteins: P, T, L and H. (R)-lipoate is required as a cofactor.

Its function is as follows. The glycine cleavage system catalyzes the degradation of glycine. The H protein shuttles the methylamine group of glycine from the P protein to the T protein. The sequence is that of Glycine cleavage system H protein from Carboxydothermus hydrogenoformans (strain ATCC BAA-161 / DSM 6008 / Z-2901).